The primary structure comprises 345 residues: Aminopeptidase YpdE (345 aa).

Positions 62 and 166 each coordinate a divalent metal cation. Glu-198 serves as the catalytic Proton acceptor. 3 residues coordinate a divalent metal cation: Glu-199, Asp-221, and His-308.

It belongs to the peptidase M42 family. It depends on Co(2+) as a cofactor. Ni(2+) serves as cofactor. The cofactor is Mn(2+). Cu(2+) is required as a cofactor.

Has a broad aminopeptidase activity on non-blocked peptides by progressively cleaving amino acids off the peptide substrate. Aminopeptidase activity stops at the residue before the first proline in the peptide. Cannot cleave when proline is the first N-terminal residue. In Escherichia coli (strain K12), this protein is Aminopeptidase YpdE (ypdE).